The following is a 120-amino-acid chain: Large ribosomal subunit protein bL19c (120 aa).

The protein belongs to the bacterial ribosomal protein bL19 family.

It is found in the plastid. The protein localises to the chloroplast. This is Large ribosomal subunit protein bL19c from Thalassiosira pseudonana (Marine diatom).